We begin with the raw amino-acid sequence, 434 residues long: UDP-N-acetylglucosamine 1-carboxyvinyltransferase (434 aa).

34 to 35 lines the phosphoenolpyruvate pocket; sequence KN. R104 is a binding site for UDP-N-acetyl-alpha-D-glucosamine. C128 acts as the Proton donor in catalysis. C128 is modified (2-(S-cysteinyl)pyruvic acid O-phosphothioketal). UDP-N-acetyl-alpha-D-glucosamine contacts are provided by D319 and I341.

This sequence belongs to the EPSP synthase family. MurA subfamily.

Its subcellular location is the cytoplasm. It carries out the reaction phosphoenolpyruvate + UDP-N-acetyl-alpha-D-glucosamine = UDP-N-acetyl-3-O-(1-carboxyvinyl)-alpha-D-glucosamine + phosphate. Its pathway is cell wall biogenesis; peptidoglycan biosynthesis. Cell wall formation. Adds enolpyruvyl to UDP-N-acetylglucosamine. This chain is UDP-N-acetylglucosamine 1-carboxyvinyltransferase, found in Prochlorococcus marinus (strain MIT 9313).